Here is a 262-residue protein sequence, read N- to C-terminus: Ribose-5-phosphate isomerase A (262 aa).

Substrate-binding positions include 33–36 (TGST), 89–92 (DGAD), and 102–105 (KGGG). The active-site Proton acceptor is the Glu111. Lys129 contacts substrate.

The protein belongs to the ribose 5-phosphate isomerase family. Homodimer.

The catalysed reaction is aldehydo-D-ribose 5-phosphate = D-ribulose 5-phosphate. It participates in carbohydrate degradation; pentose phosphate pathway; D-ribose 5-phosphate from D-ribulose 5-phosphate (non-oxidative stage): step 1/1. Its function is as follows. Catalyzes the reversible conversion of ribose-5-phosphate to ribulose 5-phosphate. This Cereibacter sphaeroides (strain ATCC 17023 / DSM 158 / JCM 6121 / CCUG 31486 / LMG 2827 / NBRC 12203 / NCIMB 8253 / ATH 2.4.1.) (Rhodobacter sphaeroides) protein is Ribose-5-phosphate isomerase A.